The following is a 173-amino-acid chain: Crossover junction endodeoxyribonuclease RuvC (173 aa).

Catalysis depends on residues Asp8, Glu69, and Asp141. Residues Asp8, Glu69, and Asp141 each contribute to the Mg(2+) site.

This sequence belongs to the RuvC family. Homodimer which binds Holliday junction (HJ) DNA. The HJ becomes 2-fold symmetrical on binding to RuvC with unstacked arms; it has a different conformation from HJ DNA in complex with RuvA. In the full resolvosome a probable DNA-RuvA(4)-RuvB(12)-RuvC(2) complex forms which resolves the HJ. Requires Mg(2+) as cofactor.

It is found in the cytoplasm. It carries out the reaction Endonucleolytic cleavage at a junction such as a reciprocal single-stranded crossover between two homologous DNA duplexes (Holliday junction).. Its function is as follows. The RuvA-RuvB-RuvC complex processes Holliday junction (HJ) DNA during genetic recombination and DNA repair. Endonuclease that resolves HJ intermediates. Cleaves cruciform DNA by making single-stranded nicks across the HJ at symmetrical positions within the homologous arms, yielding a 5'-phosphate and a 3'-hydroxyl group; requires a central core of homology in the junction. The consensus cleavage sequence is 5'-(A/T)TT(C/G)-3'. Cleavage occurs on the 3'-side of the TT dinucleotide at the point of strand exchange. HJ branch migration catalyzed by RuvA-RuvB allows RuvC to scan DNA until it finds its consensus sequence, where it cleaves and resolves the cruciform DNA. This is Crossover junction endodeoxyribonuclease RuvC from Stenotrophomonas maltophilia (strain K279a).